The following is a 312-amino-acid chain: Ribosomal RNA small subunit methyltransferase H (312 aa).

S-adenosyl-L-methionine-binding positions include 35 to 37 (GGH), Asp-55, Phe-79, Asp-101, and Gln-108.

Belongs to the methyltransferase superfamily. RsmH family.

It is found in the cytoplasm. The enzyme catalyses cytidine(1402) in 16S rRNA + S-adenosyl-L-methionine = N(4)-methylcytidine(1402) in 16S rRNA + S-adenosyl-L-homocysteine + H(+). Its function is as follows. Specifically methylates the N4 position of cytidine in position 1402 (C1402) of 16S rRNA. The sequence is that of Ribosomal RNA small subunit methyltransferase H from Buchnera aphidicola subsp. Schizaphis graminum (strain Sg).